Consider the following 129-residue polypeptide: uncharacterized protein (129 aa).

This is an uncharacterized protein from Homo sapiens (Human).